Here is a 193-residue protein sequence, read N- to C-terminus: A-type ATP synthase subunit E (193 aa).

This sequence belongs to the V-ATPase E subunit family. In terms of assembly, has multiple subunits with at least A(3), B(3), C, D, E, F, H, I and proteolipid K(x).

It localises to the cell membrane. Functionally, component of the A-type ATP synthase that produces ATP from ADP in the presence of a proton gradient across the membrane. The protein is A-type ATP synthase subunit E of Haloquadratum walsbyi (strain DSM 16790 / HBSQ001).